The sequence spans 171 residues: 3-hydroxydecanoyl-[acyl-carrier-protein] dehydratase (171 aa).

The active site involves histidine 70.

The protein belongs to the thioester dehydratase family. FabA subfamily. Homodimer.

Its subcellular location is the cytoplasm. It carries out the reaction a (3R)-hydroxyacyl-[ACP] = a (2E)-enoyl-[ACP] + H2O. The enzyme catalyses (3R)-hydroxydecanoyl-[ACP] = (2E)-decenoyl-[ACP] + H2O. It catalyses the reaction (2E)-decenoyl-[ACP] = (3Z)-decenoyl-[ACP]. It functions in the pathway lipid metabolism; fatty acid biosynthesis. Functionally, necessary for the introduction of cis unsaturation into fatty acids. Catalyzes the dehydration of (3R)-3-hydroxydecanoyl-ACP to E-(2)-decenoyl-ACP and then its isomerization to Z-(3)-decenoyl-ACP. Can catalyze the dehydratase reaction for beta-hydroxyacyl-ACPs with saturated chain lengths up to 16:0, being most active on intermediate chain length. The protein is 3-hydroxydecanoyl-[acyl-carrier-protein] dehydratase of Shewanella denitrificans (strain OS217 / ATCC BAA-1090 / DSM 15013).